Here is a 61-residue protein sequence, read N- to C-terminus: Large ribosomal subunit protein bL28 (61 aa).

Residues 1–26 form a disordered region; that stretch reads MAKDFLNGKRTHFGNKRSHALNSSRR. The segment covering 9-19 has biased composition (basic residues); that stretch reads KRTHFGNKRSH.

It belongs to the bacterial ribosomal protein bL28 family.

The sequence is that of Large ribosomal subunit protein bL28 from Levilactobacillus brevis (strain ATCC 367 / BCRC 12310 / CIP 105137 / JCM 1170 / LMG 11437 / NCIMB 947 / NCTC 947) (Lactobacillus brevis).